A 326-amino-acid polypeptide reads, in one-letter code: DNA-directed RNA polymerase subunit alpha (326 aa).

The interval 1–231 (MQTNLLKPKI…DQLVVFAALE (231 aa)) is alpha N-terminal domain (alpha-NTD). Residues 247-326 (VDPMLMRPVD…ESWPPANLEK (80 aa)) are alpha C-terminal domain (alpha-CTD).

The protein belongs to the RNA polymerase alpha chain family. As to quaternary structure, homodimer. The RNAP catalytic core consists of 2 alpha, 1 beta, 1 beta' and 1 omega subunit. When a sigma factor is associated with the core the holoenzyme is formed, which can initiate transcription.

The catalysed reaction is RNA(n) + a ribonucleoside 5'-triphosphate = RNA(n+1) + diphosphate. DNA-dependent RNA polymerase catalyzes the transcription of DNA into RNA using the four ribonucleoside triphosphates as substrates. The protein is DNA-directed RNA polymerase subunit alpha of Polynucleobacter necessarius subsp. necessarius (strain STIR1).